Consider the following 487-residue polypeptide: Phenylalanine--tRNA ligase alpha subunit (487 aa).

L-phenylalanine-binding positions include Thr-319, 361–363 (QVE), and Tyr-401. Residue Glu-403 coordinates Mg(2+). Phe-427 is a binding site for L-phenylalanine.

It belongs to the class-II aminoacyl-tRNA synthetase family. Phe-tRNA synthetase alpha subunit type 2 subfamily. In terms of assembly, tetramer of two alpha and two beta subunits. The cofactor is Mg(2+).

Its subcellular location is the cytoplasm. The catalysed reaction is tRNA(Phe) + L-phenylalanine + ATP = L-phenylalanyl-tRNA(Phe) + AMP + diphosphate + H(+). The polypeptide is Phenylalanine--tRNA ligase alpha subunit (phesA) (Dictyostelium discoideum (Social amoeba)).